Consider the following 811-residue polypeptide: Beta-catenin homolog sys-1 (811 aa).

The interval 1-105 is disordered; that stretch reads MHSTGEPQRG…SRGPAAPAQN (105 aa). The span at 64 to 103 shows a compositional bias: low complexity; it reads QQQQMTPQALSTQQQQQVQQQQQRQLYSSPSPSRGPAAPA.

In terms of assembly, interacts with TCF transcription factor pop-1 (via N-terminal region); interaction is direct.

The protein localises to the nucleus. Its subcellular location is the cytoplasm. It localises to the cytoplasmic granule. It is found in the cytoskeleton. The protein resides in the microtubule organizing center. The protein localises to the centrosome. Its subcellular location is the chromosome. It localises to the centromere. It is found in the kinetochore. Its function is as follows. Transcription coregulator. Part of the Wnt signaling asymmetry pathway, probably acting downstream of putative frizzled ligand mom-2, Wnt/frizzled receptors lin-17 and mom-5, and dishevelled homolog dsh-2. Activates or represses target gene expression, depending on upstream Wnt signals and interactions with transcription factors, such as pop-1. Required for the activation of Wnt-responsive genes in the E blastomere; thereby leading to a role in endoderm specification and gut development. Reciprocal distribution patterns of sys-1 and pop-1/TCF in the daughters of anterior-posterior cell divisions functions in specifying cell fate; a higher sys-1 to pop-1 ratio promotes the posterior cell fate, whereas a low sys-1 to pop-1 ratio promotes the anterior fate. Represses expression of homeobox ttx-3 in neuroblasts of the SIAD/SIBV lineage, perhaps acting by blocking its transcriptional activation by a complex consisting of ref-2 and pop-1. Required for early organization of the hermaphrodite, but not the male, gonad; involved in generation of regulatory cells, known as the distal tip cells (DTC), and in formation of the somatic gonadal primordium. Involved in regulating asymmetric divisions of the somatic gonadal precursor cells (SGP), Z1 and Z4. In Caenorhabditis elegans, this protein is Beta-catenin homolog sys-1.